The chain runs to 418 residues: Vasopressin V1a receptor (418 aa).

The tract at residues 1–43 is disordered; that stretch reads MRLSAGPDAGPSGNSSPWWPLATGAGNTSREAEALGEGNGPPR. The Extracellular segment spans residues 1–52; the sequence is MRLSAGPDAGPSGNSSPWWPLATGAGNTSREAEALGEGNGPPRDVRNEELAK. Residue asparagine 27 is glycosylated (N-linked (GlcNAc...) asparagine). The helical transmembrane segment at 53 to 76 threads the bilayer; that stretch reads LEIAVLAVTFAVAVLGNSSVLLAL. Topologically, residues 77-88 are cytoplasmic; that stretch reads HRTPRKTSRMHL. A helical transmembrane segment spans residues 89–110; sequence FIRHLSLADLAVAFFQVLPQMC. Residues 111–125 are Extracellular-facing; it reads WDITYRFRGPDWLCR. The cysteines at positions 124 and 203 are disulfide-linked. Residues 126–147 traverse the membrane as a helical segment; sequence VVKHLQVFGMFASAYMLVVMTA. At 148-168 the chain is on the cytoplasmic side; sequence DRYIAVCHPLKTLQQPARRSR. Residues 169 to 190 form a helical membrane-spanning segment; the sequence is LMIAAAWVLSFVLSTPQYFVFS. The Extracellular segment spans residues 191–218; sequence MIEVNNVTKARDCWATFIQPWGSRAYVT. A glycan (N-linked (GlcNAc...) asparagine) is linked at asparagine 196. The helical transmembrane segment at 219–239 threads the bilayer; the sequence is WMTGGIFVAPVVILGTCYGFI. Over 240 to 293 the chain is Cytoplasmic; that stretch reads CYNIWCNVRGKTASRQSKGAEQAGVAFQKGFLLAPCVSSVKSISRAKIRTVKMT. Residues 294–313 traverse the membrane as a helical segment; it reads FVIVTAYIVCWAPFFIIQMW. The Extracellular portion of the chain corresponds to 314-331; that stretch reads SVWDPMSVWTESENPTIT. Residues 332-351 form a helical membrane-spanning segment; the sequence is ITALLGSLNSCCNPWIYMFF. The Cytoplasmic segment spans residues 352-418; it reads SGHLLQDCVQ…KSIKFIPVST (67 aa). S-palmitoyl cysteine attachment occurs at residues cysteine 365 and cysteine 366. The tract at residues 377–410 is disordered; sequence DTDSMSRRQTFYSNNRSPTNSTGMWKDSPKSSKS. Residues 383–399 are compositionally biased toward polar residues; that stretch reads RRQTFYSNNRSPTNSTG. Serine 404 is subject to Phosphoserine.

Belongs to the G-protein coupled receptor 1 family. Vasopressin/oxytocin receptor subfamily.

The protein resides in the cell membrane. In terms of biological role, receptor for arginine vasopressin. The activity of this receptor is mediated by G proteins which activate a phosphatidyl-inositol-calcium second messenger system. Has been involved in social behaviors, including affiliation and attachment. The protein is Vasopressin V1a receptor (AVPR1A) of Homo sapiens (Human).